The sequence spans 382 residues: MSHKDLTSGEPAGRPKPRVAVLFGGRSSEHAVSCVTAAGVLGAINKDKYDVIPIGIAKSGQWVLAGGDTAQWSLAGKALPEVAPSEQTVTLAEIGGEHQLIVAAPNEVPQELGTVDVVFPLLHGPFGEDGTIQGLLELSDTRYVGAGVLASAVGMDKHFMKVVFESAGLHVGPYVAVTDRQWQKDPEAVRKQVDRLGFPVFVKPARAGSSMGISKVDSLEGLDAAIEEARRHDLKLVIEAGIVGREIECAVLEGRGTDAPRTSLPGEISVAGGGHEFYDFNAKYVEDDAASLSCPADIPDEAIARVRELAAAAFDAVGAEGLSRVDFFYTPDGDLIINEINTMPGFTPKSMYPQMWAKSGLGYAELIDELIHLALNRKTGLR.

One can recognise an ATP-grasp domain in the interval 161-372 (KVVFESAGLH…YAELIDELIH (212 aa)). 193–248 (VDRLGFPVFVKPARAGSSMGISKVDSLEGLDAAIEEARRHDLKLVIEAGIVGREIE) contacts ATP. Mg(2+) contacts are provided by Asp-326, Glu-339, and Asn-341.

The protein belongs to the D-alanine--D-alanine ligase family. The cofactor is Mg(2+). It depends on Mn(2+) as a cofactor.

Its subcellular location is the cytoplasm. The enzyme catalyses 2 D-alanine + ATP = D-alanyl-D-alanine + ADP + phosphate + H(+). Its pathway is cell wall biogenesis; peptidoglycan biosynthesis. Its function is as follows. Cell wall formation. The chain is D-alanine--D-alanine ligase from Pseudarthrobacter chlorophenolicus (strain ATCC 700700 / DSM 12829 / CIP 107037 / JCM 12360 / KCTC 9906 / NCIMB 13794 / A6) (Arthrobacter chlorophenolicus).